We begin with the raw amino-acid sequence, 599 residues long: Elongation factor 4 (599 aa).

The tr-type G domain maps to 2 to 184 (KNIRNFSIIA…RLVRDIPPPQ (183 aa)). Residues 14-19 (DHGKST) and 131-134 (NKID) contribute to the GTP site.

This sequence belongs to the TRAFAC class translation factor GTPase superfamily. Classic translation factor GTPase family. LepA subfamily.

Its subcellular location is the cell inner membrane. It carries out the reaction GTP + H2O = GDP + phosphate + H(+). Functionally, required for accurate and efficient protein synthesis under certain stress conditions. May act as a fidelity factor of the translation reaction, by catalyzing a one-codon backward translocation of tRNAs on improperly translocated ribosomes. Back-translocation proceeds from a post-translocation (POST) complex to a pre-translocation (PRE) complex, thus giving elongation factor G a second chance to translocate the tRNAs correctly. Binds to ribosomes in a GTP-dependent manner. The protein is Elongation factor 4 of Salmonella arizonae (strain ATCC BAA-731 / CDC346-86 / RSK2980).